Here is a 485-residue protein sequence, read N- to C-terminus: WD repeat-containing protein 13 (485 aa).

Phosphoserine is present on residues Ser70, Ser74, and Ser79. Arg114 carries the post-translational modification Asymmetric dimethylarginine; alternate. Arg114 bears the Omega-N-methylarginine; alternate mark. 5 WD repeats span residues 170 to 210 (HVDE…PTVL), 215 to 254 (GHTR…CIRE), 302 to 341 (KLTG…GKLT), 406 to 446 (HPVR…KAAV), and 451 to 484 (GHSA…RREQ).

The protein localises to the nucleus. This chain is WD repeat-containing protein 13 (WDR13), found in Pongo abelii (Sumatran orangutan).